Consider the following 92-residue polypeptide: UPF0223 protein SPy_1248/M5005_Spy0958 (92 aa).

This sequence belongs to the UPF0223 family.

This Streptococcus pyogenes serotype M1 protein is UPF0223 protein SPy_1248/M5005_Spy0958.